The primary structure comprises 323 residues: MGNRVSREDFEWVYTDQPHADRRREILAKYPEIKSLMKPDPNLIWIIIMMVLTQLAAFYIVKDLDWKWVIFGAYAFGSCINHSMTLGIHEIAHNAAFGNCKAMWNRWFGMFANLPIGIPYSVSFKSYHMDHHRYLGADGVDVDIPTDFEGWFFCTAFRKFIWVILQPLFYAFRPLFINPKPITYLEVINTVAQVTFDILIYYFLGIKSLVYMLAASLLGLGLHPISGHFIAEHYMFLKGHETYSYYGPLNLLTFNVGYHNEHHDFPNIPGKSLPLVRKIAAEYYDNLPHYNSWIKVLYDFVMDDTISPYSRMKRHQKGEMVLE.

Glycine 2 carries N-myristoyl glycine lipidation. The next 2 membrane-spanning stretches (helical) occupy residues 41–61 (PNLI…FYIV) and 68–88 (WVIF…TLGI). The short motif at 89–93 (HEIAH) is the Histidine box-1 element. A helical transmembrane segment spans residues 107–127 (WFGMFANLPIGIPYSVSFKSY). The Histidine box-2 signature appears at 128–132 (HMDHH). 3 consecutive transmembrane segments (helical) span residues 152–172 (FFCT…FYAF), 184–204 (YLEV…YYFL), and 209–229 (LVYM…SGHF). The short motif at 259-263 (HNEHH) is the Histidine box-3 element. Position 307 is a phosphoserine (serine 307).

It belongs to the fatty acid desaturase type 1 family. DEGS subfamily. As to quaternary structure, interacts with RLBP1; the interaction increases synthesis of chromophore-precursors by DEGS1. Myristoylation can target the enzyme to the mitochondria leading to an increase in ceramide levels.

Its subcellular location is the mitochondrion membrane. It is found in the endoplasmic reticulum membrane. The enzyme catalyses an N-acylsphinganine + 2 Fe(II)-[cytochrome b5] + O2 + 2 H(+) = an N-acylsphing-4-enine + 2 Fe(III)-[cytochrome b5] + 2 H2O. The catalysed reaction is all-trans-retinol = 11-cis-retinol. It catalyses the reaction all-trans-retinol = 9-cis-retinol. It carries out the reaction all-trans-retinol = 13-cis-retinol. The enzyme catalyses 11-cis-retinol = 13-cis-retinol. The catalysed reaction is 11-cis-retinol = 9-cis-retinol. In terms of biological role, has sphingolipid-delta-4-desaturase activity. Converts D-erythro-sphinganine to D-erythro-sphingosine (E-sphing-4-enine). Catalyzes the equilibrium isomerization of retinols. The sequence is that of Sphingolipid delta(4)-desaturase DES1 (DEGS1) from Pongo abelii (Sumatran orangutan).